Reading from the N-terminus, the 602-residue chain is Isocitrate dehydrogenase kinase/phosphatase (602 aa).

ATP-binding positions include 327 to 333 (APGIKGM) and Lys348. The active site involves Asp383.

It belongs to the AceK family.

The protein localises to the cytoplasm. It carries out the reaction L-seryl-[isocitrate dehydrogenase] + ATP = O-phospho-L-seryl-[isocitrate dehydrogenase] + ADP + H(+). Functionally, bifunctional enzyme which can phosphorylate or dephosphorylate isocitrate dehydrogenase (IDH) on a specific serine residue. This is a regulatory mechanism which enables bacteria to bypass the Krebs cycle via the glyoxylate shunt in response to the source of carbon. When bacteria are grown on glucose, IDH is fully active and unphosphorylated, but when grown on acetate or ethanol, the activity of IDH declines drastically concomitant with its phosphorylation. This chain is Isocitrate dehydrogenase kinase/phosphatase, found in Paraburkholderia phymatum (strain DSM 17167 / CIP 108236 / LMG 21445 / STM815) (Burkholderia phymatum).